The chain runs to 442 residues: Protein translocase subunit SecF (442 aa).

Positions 1 to 39 are disordered; that stretch reads MASKAKTGRDDEATSAVELTEATESAVARTDGDSTTDTA. The next 6 membrane-spanning stretches (helical) occupy residues 67 to 87, 187 to 207, 218 to 238, 243 to 263, 301 to 321, and 331 to 351; these read WFGV…FRGF, ITKK…LYIT, AITA…LVGF, ATVI…VIVF, LIGV…LGVG, and LIGI…LLVT. The tract at residues 366-442 is disordered; that stretch reads VLKRRNSGSP…PTGKRNAGRR (77 aa). The span at 402–432 shows a compositional bias: low complexity; that stretch reads QASSQSAPRAAQGSSKPAPGARPVRPVGTRR. Residues 433-442 show a composition bias toward basic residues; it reads PTGKRNAGRR.

It belongs to the SecD/SecF family. SecF subfamily. In terms of assembly, forms a complex with SecD. Part of the essential Sec protein translocation apparatus which comprises SecA, SecYEG and auxiliary proteins SecDF. Other proteins may also be involved.

It localises to the cell membrane. Part of the Sec protein translocase complex. Interacts with the SecYEG preprotein conducting channel. SecDF uses the proton motive force (PMF) to complete protein translocation after the ATP-dependent function of SecA. In Mycobacterium tuberculosis (strain CDC 1551 / Oshkosh), this protein is Protein translocase subunit SecF.